The sequence spans 285 residues: Acetyl-coenzyme A carboxylase carboxyl transferase subunit beta (285 aa).

The 257-residue stretch at 29–285 (IMTKCPNCKK…ILKIHQEVSN (257 aa)) folds into the CoA carboxyltransferase N-terminal domain. Residues Cys-33, Cys-36, Cys-52, and Cys-55 each coordinate Zn(2+). Residues 33-55 (CPNCKKIMYTKELNENLNVCFNC) form a C4-type zinc finger.

This sequence belongs to the AccD/PCCB family. As to quaternary structure, acetyl-CoA carboxylase is a heterohexamer composed of biotin carboxyl carrier protein (AccB), biotin carboxylase (AccC) and two subunits each of ACCase subunit alpha (AccA) and ACCase subunit beta (AccD). Zn(2+) is required as a cofactor.

It is found in the cytoplasm. It catalyses the reaction N(6)-carboxybiotinyl-L-lysyl-[protein] + acetyl-CoA = N(6)-biotinyl-L-lysyl-[protein] + malonyl-CoA. It functions in the pathway lipid metabolism; malonyl-CoA biosynthesis; malonyl-CoA from acetyl-CoA: step 1/1. Component of the acetyl coenzyme A carboxylase (ACC) complex. Biotin carboxylase (BC) catalyzes the carboxylation of biotin on its carrier protein (BCCP) and then the CO(2) group is transferred by the transcarboxylase to acetyl-CoA to form malonyl-CoA. The chain is Acetyl-coenzyme A carboxylase carboxyl transferase subunit beta from Staphylococcus epidermidis (strain ATCC 35984 / DSM 28319 / BCRC 17069 / CCUG 31568 / BM 3577 / RP62A).